Reading from the N-terminus, the 156-residue chain is Small ribosomal subunit protein uS7 (156 aa).

Belongs to the universal ribosomal protein uS7 family. In terms of assembly, part of the 30S ribosomal subunit. Contacts proteins S9 and S11.

Functionally, one of the primary rRNA binding proteins, it binds directly to 16S rRNA where it nucleates assembly of the head domain of the 30S subunit. Is located at the subunit interface close to the decoding center, probably blocks exit of the E-site tRNA. The protein is Small ribosomal subunit protein uS7 of Afipia carboxidovorans (strain ATCC 49405 / DSM 1227 / KCTC 32145 / OM5) (Oligotropha carboxidovorans).